The sequence spans 55 residues: Mitochondrial import receptor subunit TOM7 homolog (55 aa).

The Cytoplasmic portion of the chain corresponds to 1–20 (MVKLSKEAKQRLQQLFKGGQ). Residues 21–40 (FAIRWGFIPLVIYLGFTRGA) traverse the membrane as a helical segment. The Mitochondrial intermembrane portion of the chain corresponds to 41–55 (DPGMPEPSVLSLLWG).

Belongs to the Tom7 family. In terms of assembly, forms part of the preprotein translocase complex of the outer mitochondrial membrane (TOM complex) which consists of at least 7 different proteins (TOMM5, TOMM6, TOMM7, TOMM20, TOMM22, TOMM40 and TOMM70).

Its subcellular location is the mitochondrion outer membrane. Its function is as follows. Required for assembly and stability of the TOM complex. Positive regulator of PRKN translocation to damaged mitochondria. Acts probably by stabilizing PINK1 on the outer membrane of depolarized mitochondria. This Mus musculus (Mouse) protein is Mitochondrial import receptor subunit TOM7 homolog (Tomm7).